A 192-amino-acid chain; its full sequence is Ubiquitin-conjugating enzyme E2 T (192 aa).

The UBC core domain occupies 2 to 152; it reads QRVSRLKREL…AKKWTEKHAL (151 aa). Cys86 functions as the Glycyl thioester intermediate in the catalytic mechanism. Positions 150-192 are disordered; sequence HALPAPQGSDKESQEKSGSSEGTSHKRKSAEIAEESKKPCREP. Residues 178–192 show a composition bias toward basic and acidic residues; the sequence is SAEIAEESKKPCREP.

Belongs to the ubiquitin-conjugating enzyme family.

The protein localises to the nucleus. The enzyme catalyses S-ubiquitinyl-[E1 ubiquitin-activating enzyme]-L-cysteine + [E2 ubiquitin-conjugating enzyme]-L-cysteine = [E1 ubiquitin-activating enzyme]-L-cysteine + S-ubiquitinyl-[E2 ubiquitin-conjugating enzyme]-L-cysteine.. It functions in the pathway protein modification; protein ubiquitination. Functionally, accepts ubiquitin from the E1 complex and catalyzes its covalent attachment to other proteins. Catalyzes monoubiquitination. Involved in DNA repair. This chain is Ubiquitin-conjugating enzyme E2 T (ube2t), found in Xenopus laevis (African clawed frog).